We begin with the raw amino-acid sequence, 41 residues long: Sucrose porin (41 aa).

A signal peptide spans 1–22 (MYRKSTLAMLIALLTSAASAHA).

The protein belongs to the porin LamB (TC 1.B.3) family. In terms of assembly, homotrimer.

The protein localises to the cell outer membrane. Its function is as follows. Porin for sucrose uptake. This is Sucrose porin (scrY) from Salmonella thompson.